A 283-amino-acid polypeptide reads, in one-letter code: MKNIGINVNTTKDPNKEMLNFIIESIKNIDKSVNIKTYENCMGLDENESSSLDVIIVLGGDGTILNTSRNVLRSKTPILGINIGHLGFLAQVEINSVEAALEKLFRGEYTIEKRDMIQCTYNEGNKIKRYDGLNDVVLYRGIKSRIQRYDVYINDAFYNSFSGDGIIICTSTGSTAYNLSAGGPIIHPLLDVLCLTPMYSQFFASRSIVLDSRSLISISIEKNYEDSFLSIDGQKWVAVNGSQTIKINKSKNKRRLIKFDDAYFNTLREKIIFNAKGCEGGIL.

The Proton acceptor role is filled by D61. NAD(+)-binding positions include D61–G62, N134–D135, R145, D164, T175–S180, and Q234.

This sequence belongs to the NAD kinase family. The cofactor is a divalent metal cation.

The protein localises to the cytoplasm. It carries out the reaction NAD(+) + ATP = ADP + NADP(+) + H(+). Functionally, involved in the regulation of the intracellular balance of NAD and NADP, and is a key enzyme in the biosynthesis of NADP. Catalyzes specifically the phosphorylation on 2'-hydroxyl of the adenosine moiety of NAD to yield NADP. The protein is NAD kinase of Clostridium kluyveri (strain NBRC 12016).